A 429-amino-acid polypeptide reads, in one-letter code: Histidine--tRNA ligase (429 aa).

It belongs to the class-II aminoacyl-tRNA synthetase family. Homodimer.

It localises to the cytoplasm. It catalyses the reaction tRNA(His) + L-histidine + ATP = L-histidyl-tRNA(His) + AMP + diphosphate + H(+). This chain is Histidine--tRNA ligase, found in Chlorobium phaeobacteroides (strain DSM 266 / SMG 266 / 2430).